Here is a 340-residue protein sequence, read N- to C-terminus: Holliday junction branch migration complex subunit RuvB (340 aa).

The segment at Met1–Tyr184 is large ATPase domain (RuvB-L). ATP is bound by residues Leu23, Arg24, Gly65, Lys68, Thr69, Thr70, Glu131–Phe133, Arg174, Tyr184, and Arg221. Thr69 provides a ligand contact to Mg(2+). Positions Asn185 to His255 are small ATPAse domain (RuvB-S). The interval Ala258–Phe340 is head domain (RuvB-H). DNA is bound by residues Arg313 and Arg318.

It belongs to the RuvB family. In terms of assembly, homohexamer. Forms an RuvA(8)-RuvB(12)-Holliday junction (HJ) complex. HJ DNA is sandwiched between 2 RuvA tetramers; dsDNA enters through RuvA and exits via RuvB. An RuvB hexamer assembles on each DNA strand where it exits the tetramer. Each RuvB hexamer is contacted by two RuvA subunits (via domain III) on 2 adjacent RuvB subunits; this complex drives branch migration. In the full resolvosome a probable DNA-RuvA(4)-RuvB(12)-RuvC(2) complex forms which resolves the HJ.

It localises to the cytoplasm. It catalyses the reaction ATP + H2O = ADP + phosphate + H(+). Its function is as follows. The RuvA-RuvB-RuvC complex processes Holliday junction (HJ) DNA during genetic recombination and DNA repair, while the RuvA-RuvB complex plays an important role in the rescue of blocked DNA replication forks via replication fork reversal (RFR). RuvA specifically binds to HJ cruciform DNA, conferring on it an open structure. The RuvB hexamer acts as an ATP-dependent pump, pulling dsDNA into and through the RuvAB complex. RuvB forms 2 homohexamers on either side of HJ DNA bound by 1 or 2 RuvA tetramers; 4 subunits per hexamer contact DNA at a time. Coordinated motions by a converter formed by DNA-disengaged RuvB subunits stimulates ATP hydrolysis and nucleotide exchange. Immobilization of the converter enables RuvB to convert the ATP-contained energy into a lever motion, pulling 2 nucleotides of DNA out of the RuvA tetramer per ATP hydrolyzed, thus driving DNA branch migration. The RuvB motors rotate together with the DNA substrate, which together with the progressing nucleotide cycle form the mechanistic basis for DNA recombination by continuous HJ branch migration. Branch migration allows RuvC to scan DNA until it finds its consensus sequence, where it cleaves and resolves cruciform DNA. This is Holliday junction branch migration complex subunit RuvB from Flavobacterium psychrophilum (strain ATCC 49511 / DSM 21280 / CIP 103535 / JIP02/86).